A 313-amino-acid chain; its full sequence is Protein HEXIM2 (313 aa).

A compositionally biased stretch (polar residues) spans 1–13 (MATVNHTNCNTAS). Residues 1-78 (MATVNHTNCN…RGSRTQSPGG (78 aa)) form a disordered region. Phosphoserine is present on residues S28, S52, S75, and S80. Residues 64–77 (SSCNIRGSRTQSPG) show a composition bias toward polar residues. Disordered stretches follow at residues 111 to 139 (EKQQRDERQSQRASRVREEMFAKGQPLAP), 155 to 194 (PNLDVLHGPSHSGSGGENEAGDSDGQGRAHGEFQQRDFSE), and 267 to 313 (QENE…AGDR). Positions 112–131 (KQQRDERQSQRASRVREEMF) are enriched in basic and acidic residues. Residues 139–142 (PYNT) are interaction with P-TEFb. A compositionally biased stretch (basic and acidic residues) spans 179-194 (GQGRAHGEFQQRDFSE). The stretch at 207-276 (RSKQELVRDY…QENEMWNREG (70 aa)) forms a coiled coil. The tract at residues 225–286 (QAEQETRRLR…GYCDQEKPAS (62 aa)) is interaction with CCNT1, HEXIM1 and HEXIM2.

Belongs to the HEXIM family. Homooligomer and heterooligomer with HEXIM1; probably dimeric. Core component of the 7SK RNP complex, at least composed of 7SK RNA, LARP7, MEPCE, HEXIM1 (or HEXIM2) and P-TEFb (composed of CDK9 and CCNT1/cyclin-T1). Interacts with CCNT2.

Its subcellular location is the nucleus. Its function is as follows. Transcriptional regulator which functions as a general RNA polymerase II transcription inhibitor. Core component of the 7SK RNP complex: in cooperation with 7SK snRNA sequesters P-TEFb in a large inactive 7SK snRNP complex preventing RNA polymerase II phosphorylation and subsequent transcriptional elongation. In Mus musculus (Mouse), this protein is Protein HEXIM2 (Hexim2).